Consider the following 162-residue polypeptide: Corticoliberin (162 aa).

An N-terminal signal peptide occupies residues methionine 1–alanine 24. The propeptide occupies isoleucine 25 to arginine 119. Phenylalanine 160 carries the post-translational modification Phenylalanine amide.

Belongs to the sauvagine/corticotropin-releasing factor/urotensin I family.

It localises to the secreted. Its function is as follows. This hormone from hypothalamus regulates the release of corticotropin from pituitary gland. The sequence is that of Corticoliberin (crh) from Carassius auratus (Goldfish).